The following is a 219-amino-acid chain: Elongation factor Ts (219 aa).

The interval 82 to 85 is involved in Mg(2+) ion dislocation from EF-Tu; the sequence is TDFV.

Belongs to the EF-Ts family.

It localises to the cytoplasm. Associates with the EF-Tu.GDP complex and induces the exchange of GDP to GTP. It remains bound to the aminoacyl-tRNA.EF-Tu.GTP complex up to the GTP hydrolysis stage on the ribosome. The polypeptide is Elongation factor Ts (Anaeromyxobacter dehalogenans (strain 2CP-1 / ATCC BAA-258)).